Reading from the N-terminus, the 717-residue chain is Ubiquitin carboxyl-terminal hydrolase 11 (717 aa).

The segment at 231–268 (ATAPPVHSLEVSSQIRDSSQDSSSSLSKVEKPKEEEGK) is disordered. A compositionally biased stretch (low complexity) spans 242 to 257 (SSQIRDSSQDSSSSLS). Residues 258–268 (KVEKPKEEEGK) are compositionally biased toward basic and acidic residues. The 410-residue stretch at 298–707 (TGLQNPCNTC…EVYVLFYERM (410 aa)) folds into the USP domain. Catalysis depends on Cys-307, which acts as the Nucleophile. The tract at residues 531–577 (KKEEITSQKKKSTIFGFHSRSRSKSPHHHHHHHHSSDDSTKNAKKRN) is disordered. The segment covering 549–564 (SRSRSKSPHHHHHHHH) has biased composition (basic residues). Residue His-649 is the Proton acceptor of the active site.

The protein belongs to the peptidase C19 family.

It catalyses the reaction Thiol-dependent hydrolysis of ester, thioester, amide, peptide and isopeptide bonds formed by the C-terminal Gly of ubiquitin (a 76-residue protein attached to proteins as an intracellular targeting signal).. This is Ubiquitin carboxyl-terminal hydrolase 11 (UBP11) from Saccharomyces cerevisiae (strain ATCC 204508 / S288c) (Baker's yeast).